A 256-amino-acid chain; its full sequence is Acetyl-coenzyme A carboxylase carboxyl transferase subunit alpha (256 aa).

The CoA carboxyltransferase C-terminal domain occupies 1–236 (MTKITRIVRE…KQELLVELEQ (236 aa)).

It belongs to the AccA family. Acetyl-CoA carboxylase is a heterohexamer composed of biotin carboxyl carrier protein (AccB), biotin carboxylase (AccC) and two subunits each of ACCase subunit alpha (AccA) and ACCase subunit beta (AccD).

The protein localises to the cytoplasm. The enzyme catalyses N(6)-carboxybiotinyl-L-lysyl-[protein] + acetyl-CoA = N(6)-biotinyl-L-lysyl-[protein] + malonyl-CoA. The protein operates within lipid metabolism; malonyl-CoA biosynthesis; malonyl-CoA from acetyl-CoA: step 1/1. Its function is as follows. Component of the acetyl coenzyme A carboxylase (ACC) complex. First, biotin carboxylase catalyzes the carboxylation of biotin on its carrier protein (BCCP) and then the CO(2) group is transferred by the carboxyltransferase to acetyl-CoA to form malonyl-CoA. In Streptococcus gordonii (strain Challis / ATCC 35105 / BCRC 15272 / CH1 / DL1 / V288), this protein is Acetyl-coenzyme A carboxylase carboxyl transferase subunit alpha.